Reading from the N-terminus, the 259-residue chain is Small ribosomal subunit protein uS2 (259 aa).

It belongs to the universal ribosomal protein uS2 family.

The protein is Small ribosomal subunit protein uS2 of Streptococcus pneumoniae (strain CGSP14).